A 293-amino-acid chain; its full sequence is 4-hydroxy-tetrahydrodipicolinate synthase (293 aa).

Thr-45 lines the pyruvate pocket. Tyr-133 functions as the Proton donor/acceptor in the catalytic mechanism. The active-site Schiff-base intermediate with substrate is the Lys-161. Pyruvate is bound at residue Ile-203.

The protein belongs to the DapA family. Homotetramer; dimer of dimers.

The protein resides in the cytoplasm. It carries out the reaction L-aspartate 4-semialdehyde + pyruvate = (2S,4S)-4-hydroxy-2,3,4,5-tetrahydrodipicolinate + H2O + H(+). It participates in amino-acid biosynthesis; L-lysine biosynthesis via DAP pathway; (S)-tetrahydrodipicolinate from L-aspartate: step 3/4. Catalyzes the condensation of (S)-aspartate-beta-semialdehyde [(S)-ASA] and pyruvate to 4-hydroxy-tetrahydrodipicolinate (HTPA). The protein is 4-hydroxy-tetrahydrodipicolinate synthase of Aliivibrio fischeri (strain MJ11) (Vibrio fischeri).